The chain runs to 566 residues: NXPE family member 3 (566 aa).

A signal peptide spans 1–32 (MEKYFPKYVPFFSLLALSGLLYLLWSITSLES). N-linked (GlcNAc...) asparagine glycans are attached at residues asparagine 64, asparagine 172, asparagine 242, asparagine 303, and asparagine 344.

It belongs to the NXPE family.

It is found in the secreted. The protein is NXPE family member 3 (nxpe3) of Danio rerio (Zebrafish).